The following is a 171-amino-acid chain: MAMSQESLTFKDVFVDFTLEEWQQLDSAQKNLYRDVMLENYSHLVSVGYLVAKPDVIFRLGPGEESWMADGGTPVRTCAGEDRPEVWQVDEQIDHYKESQDKLPWQAAFIGKETLKDESGQESRTCRKSIYLSTEFDSVRQRLPKYYSWEKAFKTSFKLSWSKWKLCKKER.

In terms of domain architecture, KRAB spans Leu-8–Ala-79.

Expressed in brain, ovary, testis, prostate, tonsil, heart, bone marrow, colon, breast and kidney.

The chain is KRAB domain-containing protein 4 (KRBOX4) from Homo sapiens (Human).